The sequence spans 445 residues: StAR-related lipid transfer protein 3 (445 aa).

Residues 1–51 (MSKLPGELARDLECSLPAVASLGSSLSHSQSLSSHLLPPPEKRRAISDVRR) lie on the Cytoplasmic side of the membrane. The MENTAL domain occupies 46 to 217 (ISDVRRTFCL…YSPPESFAGS (172 aa)). The chain crosses the membrane as a helical span at residues 52-72 (TFCLFVTFDLLFISLLWIIEL). Residues 73 to 94 (NTNTGIRKNLEQEIIQYNFKTS) lie on the Extracellular side of the membrane. The chain crosses the membrane as a helical span at residues 95-115 (FFDIFVLAFFRFSGLLLGYAV). The Cytoplasmic portion of the chain corresponds to 116 to 120 (LRLQH). A helical membrane pass occupies residues 121–141 (WWVIAVTTLVSSAFLIVKVIL). At 142 to 148 (SELLSKG) the chain is on the extracellular side. The chain crosses the membrane as a helical span at residues 149–169 (AFGYLLPIVSFVLAWLETWFL). Residues 170-445 (DFKVLPQEAE…QRISELGARA (276 aa)) lie on the Cytoplasmic side of the membrane. 2 short sequence motifs (FFAT) span residues 206 to 212 (QFYSPPE) and 207 to 212 (FYSPPE). Phosphoserine occurs at positions 209, 217, and 221. Positions 248–443 (VVDQILAQEE…LRQRISELGA (196 aa)) constitute an START domain.

It belongs to the STARD3 family. Homodimer. Interacts (via the MENTAL domain) with STARD3NL. Interacts (via phosphorylated FFAT motif) with VAPA (via MSP domain). Interacts (via phosphorylated FFAT motif) with VAPB (via MSP domain). Interacts (via phosphorylated FFAT motif) with MOSPD2 (via MSP domain); this interaction allows enrichment of MOSPD2 around endosomes. In terms of processing, phosphorylation at Ser-209 is necessary and sufficient for the direct interaction of the phosphorylated FFAT motif with the MSP domain of MOSPD2, VAPA and VAPB and allows the tethering of two membranes that participates in the formation of ER-endosome contacts. Phosphorylation of the FFAT motif leads to conformation changes. Additional phosphorylations around the core FFAT motif (QFYSPPE) are not essential but strengthen the interaction with MOSPD2, VAPA and VAPB. Phosphorylation at Ser-209 of FFAT motif drives membrane tethering between the endoplasmic reticulum and late endosomes via interaction with VAPA and VAPB that in turn allows the efficient transport of sterol mediated by the START domain. Present in retina. Localizes to all neurons of macular retina and especially cone inner segments and axons (at protein level).

The protein localises to the late endosome membrane. It carries out the reaction cholesterol(in) = cholesterol(out). Sterol-binding protein that mediates cholesterol transport from the endoplasmic reticulum to endosomes. The sterol transport mechanism is triggered by phosphorylation of FFAT motif that leads to membrane tethering between the endoplasmic reticulum and late endosomes via interaction with VAPA and VAPB. Acts as a lipid transfer protein that redirects sterol to the endosome at the expense of the cell membrane and favors membrane formation inside endosomes. May also mediate cholesterol transport between other membranes, such as mitochondria membrane or cell membrane. However, such results need additional experimental evidences; probably mainly mediates cholesterol transport from the endoplasmic reticulum to endosomes. Does not activate transcriptional cholesterol sensing. Able to bind other lipids, such as lutein, a xanthophyll carotenoids that form the macular pigment of the retina. Able to bind other lipids, such as lutein, a xanthophyll carotenoids that form the macular pigment of the retina. This Macaca mulatta (Rhesus macaque) protein is StAR-related lipid transfer protein 3.